A 277-amino-acid polypeptide reads, in one-letter code: Phosphonates import ATP-binding protein PhnC (277 aa).

The ABC transporter domain maps to 3 to 251; it reads IKLDKVSARH…RLQALYAQHL (249 aa). 40 to 47 contacts ATP; that stretch reads GPSGAGKT.

This sequence belongs to the ABC transporter superfamily. Phosphonates importer (TC 3.A.1.9.1) family. As to quaternary structure, the complex is composed of two ATP-binding proteins (PhnC), two transmembrane proteins (PhnE) and a solute-binding protein (PhnD).

The protein localises to the cell inner membrane. The enzyme catalyses phosphonate(out) + ATP + H2O = phosphonate(in) + ADP + phosphate + H(+). Part of the ABC transporter complex PhnCDE involved in phosphonates import. Responsible for energy coupling to the transport system. This Polaromonas sp. (strain JS666 / ATCC BAA-500) protein is Phosphonates import ATP-binding protein PhnC.